Reading from the N-terminus, the 325-residue chain is Metacaspase-9 (325 aa).

Catalysis depends on residues His95 and Cys147. Residue Cys147 is modified to S-nitrosocysteine. Asn177 carries an N-linked (GlcNAc...) asparagine glycan.

Belongs to the peptidase C14B family. Post-translationally, the two subunits are derived from the precursor sequence by an autocatalytic mechanism. In terms of processing, S-nitrosylation at Cys-147 suppresses both autoprocessing and proteolytic activity of the full-length protein, but does not affect the activity of the mature processed form. As to expression, expressed in root tips, cauline leaves, flowers and siliques.

The protein localises to the secreted. It localises to the extracellular space. It is found in the apoplast. With respect to regulation, inhibited by serpin ZX and nitric oxide through cysteine nitrosylation. Functionally, cysteine protease that cleaves specifically after arginine or lysine residues. Does not cleave caspase-specific substrates. Required for proteolytic processing of GRI. This is Metacaspase-9 (AMC9) from Arabidopsis thaliana (Mouse-ear cress).